Here is a 499-residue protein sequence, read N- to C-terminus: Uridine-cytidine kinase A (499 aa).

A disordered region spans residues 1 to 44 (MSDNSTTKVTTNDSPSLTTTTSTTTAPTTTTTTTTTPTHNHDTT). The span at 10-38 (TTNDSPSLTTTTSTTTAPTTTTTTTTTPT) shows a compositional bias: low complexity. Residue 78 to 85 (GGSASGKT) coordinates ATP.

This sequence belongs to the uridine kinase family.

The enzyme catalyses uridine + ATP = UMP + ADP + H(+). The catalysed reaction is cytidine + ATP = CMP + ADP + H(+). It participates in pyrimidine metabolism; CTP biosynthesis via salvage pathway; CTP from cytidine: step 1/3. It functions in the pathway pyrimidine metabolism; UMP biosynthesis via salvage pathway; UMP from uridine: step 1/1. Its function is as follows. Catalyzes the conversion of uridine into uridine monophosphate and cytidine into cytidine monophosphate in the pyrimidine salvage pathway. The sequence is that of Uridine-cytidine kinase A (udkA) from Dictyostelium discoideum (Social amoeba).